A 185-amino-acid polypeptide reads, in one-letter code: Large ribosomal subunit protein bL25 (185 aa).

This sequence belongs to the bacterial ribosomal protein bL25 family. CTC subfamily. As to quaternary structure, part of the 50S ribosomal subunit; part of the 5S rRNA/L5/L18/L25 subcomplex. Contacts the 5S rRNA. Binds to the 5S rRNA independently of L5 and L18.

Its function is as follows. This is one of the proteins that binds to the 5S RNA in the ribosome where it forms part of the central protuberance. This chain is Large ribosomal subunit protein bL25, found in Chlamydia abortus (strain DSM 27085 / S26/3) (Chlamydophila abortus).